Reading from the N-terminus, the 123-residue chain is Steroid Delta-isomerase (123 aa).

Tyr12 functions as the Proton donor in the catalytic mechanism. Asp36 functions as the Proton acceptor in the catalytic mechanism. Asp96 contributes to the substrate binding site.

As to quaternary structure, homodimer.

It carries out the reaction a 3-oxo-Delta(5)-steroid = a 3-oxo-Delta(4)-steroid. This chain is Steroid Delta-isomerase (ksdI), found in Nocardioides simplex (Arthrobacter simplex).